A 586-amino-acid chain; its full sequence is Serine/threonine-protein kinase TDA1 (586 aa).

The interval 1–26 (MTTASSSASQLQQRLPEEKPWPQLSG) is disordered. The region spanning 39-351 (VTNHNSLGDG…AKNLKQHPFI (313 aa)) is the Protein kinase domain. Residues 45-53 (LGDGNFSVV) and Lys68 contribute to the ATP site. The active-site Proton acceptor is Asp180. Positions 503–524 (TTPESRSNFNTPKTLSRQGSST) are disordered. Thr504 bears the Phosphothreonine mark. A phosphoserine mark is found at Ser509 and Ser518. Thr538 bears the Phosphothreonine mark. Position 578 is a phosphoserine (Ser578).

The protein belongs to the protein kinase superfamily. Ser/Thr protein kinase family. As to quaternary structure, interacts with RIM11.

It localises to the cytoplasm. It is found in the nucleus. The catalysed reaction is L-seryl-[protein] + ATP = O-phospho-L-seryl-[protein] + ADP + H(+). It catalyses the reaction L-threonyl-[protein] + ATP = O-phospho-L-threonyl-[protein] + ADP + H(+). In terms of biological role, serine/threonine protein kinase shown to have protein phosphorylation activity in vitro. This chain is Serine/threonine-protein kinase TDA1 (TDA1), found in Saccharomyces cerevisiae (strain ATCC 204508 / S288c) (Baker's yeast).